A 282-amino-acid polypeptide reads, in one-letter code: tRNA (guanine-N(7)-)-methyltransferase (282 aa).

The interval 1–31 (MSLTDDQASKRQAYRAAKEANRKELKHVKID) is disordered. A compositionally biased stretch (basic and acidic residues) spans 16–31 (AAKEANRKELKHVKID). S-adenosyl-L-methionine contacts are provided by residues Gly99, 122–123 (EI), 157–158 (NA), and Cys177. Asp180 is an active-site residue. Residue 255-257 (TEE) coordinates S-adenosyl-L-methionine.

This sequence belongs to the class I-like SAM-binding methyltransferase superfamily. TrmB family. Forms a complex with TRM82.

It localises to the nucleus. The catalysed reaction is guanosine(46) in tRNA + S-adenosyl-L-methionine = N(7)-methylguanosine(46) in tRNA + S-adenosyl-L-homocysteine. Its pathway is tRNA modification; N(7)-methylguanine-tRNA biosynthesis. Functionally, catalyzes the formation of N(7)-methylguanine at position 46 (m7G46) in tRNA. This chain is tRNA (guanine-N(7)-)-methyltransferase, found in Eremothecium gossypii (strain ATCC 10895 / CBS 109.51 / FGSC 9923 / NRRL Y-1056) (Yeast).